The sequence spans 625 residues: tRNA (uracil-5-)-methyltransferase homolog A (625 aa).

Disordered stretches follow at residues 1–37 and 145–165; these read MSENLDNEGPKPMESCGQESSSALSCPTVSVPPAAPA and RPKADPMARRRRQEGESEPPV. Over residues 27–37 the composition is skewed to low complexity; sequence PTVSVPPAAPA. The region spanning 73 to 146 is the RRM domain; sequence FKLELQNVPR…RPLSVRLARP (74 aa). Residues 180–209 adopt a coiled-coil conformation; the sequence is YAEQLERKQLECEQVLQKLAKEIGSTNRAL. Position 378 is a phosphoserine (S378). Q411, E461, and D510 together coordinate S-adenosyl-L-methionine. The active-site Nucleophile is the C538. Residue E581 is the Proton acceptor of the active site. A disordered region spans residues 594–625; that stretch reads GTGVLGPHSPPAQPTPGPPDNTLQETGTFPSS. Pro residues predominate over residues 601–612; that stretch reads HSPPAQPTPGPP. At S602 the chain carries Phosphoserine. The span at 614–625 shows a compositional bias: polar residues; sequence NTLQETGTFPSS.

The protein belongs to the class I-like SAM-binding methyltransferase superfamily. RNA M5U methyltransferase family.

It localises to the cytoplasm. The protein localises to the cytosol. The catalysed reaction is uridine(54) in tRNA + S-adenosyl-L-methionine = 5-methyluridine(54) in tRNA + S-adenosyl-L-homocysteine + H(+). The enzyme catalyses a uridine in mRNA + S-adenosyl-L-methionine = a 5-methyluridine in mRNA + S-adenosyl-L-homocysteine + H(+). Its function is as follows. S-adenosyl-L-methionine-dependent methyltransferase that catalyzes the formation of 5-methyl-uridine in tRNAs and some mRNAs. Mainly catalyzes the methylation of uridine at position 54 (m5U54) in cytosolic tRNAs. Also able to mediate the formation of 5-methyl-uridine in some mRNAs. The protein is tRNA (uracil-5-)-methyltransferase homolog A of Homo sapiens (Human).